Here is a 303-residue protein sequence, read N- to C-terminus: D-alanine--D-alanine ligase (303 aa).

The ATP-grasp domain occupies 104-300 (KLLWNAVGLP…FEKLVERVLE (197 aa)). 132-187 (IAKLSLPVFVKPSSEGSSVGVFKVKTKEELLPAITAALEFDTIVLVEEFLTGAEYS) contacts ATP. Mg(2+) is bound by residues Asp-254, Glu-267, and Asn-269.

Belongs to the D-alanine--D-alanine ligase family. The cofactor is Mg(2+). Mn(2+) serves as cofactor.

It is found in the cytoplasm. The enzyme catalyses 2 D-alanine + ATP = D-alanyl-D-alanine + ADP + phosphate + H(+). Its pathway is cell wall biogenesis; peptidoglycan biosynthesis. Functionally, cell wall formation. The polypeptide is D-alanine--D-alanine ligase (Haemophilus ducreyi (strain 35000HP / ATCC 700724)).